Reading from the N-terminus, the 375-residue chain is MEMGSNSGPGHGPGQAESGGSSTESSSFSGGLMFGQKIYFEDGGGGSGSSSSGGRSNRRVRGGGSGQSGQIPRCQVEGCGMDLTNAKGYYSRHRVCGVHSKTPKVTVAGIEQRFCQQCSRFHQLPEFDLEKRSCRRRLAGHNERRRKPQPASLSVLASRYGRIAPSLYENGDAGMNGSFLGNQEIGWPSSRTLDTRVMRRPVSSPSWQINPMNVFSQGSVGGGGTSFSSPEIMDTKLESYKGIGDSNCALSLLSNPHQPHDNNNNNNNNNNNNNNTWRASSGFGPMTVTMAQPPPAPSQHQYLNPPWVFKDNDNDMSPVLNLGRYTEPDNCQISSGTAMGEFELSDHHHQSRRQYMEDENTRAYDSSSHHTNWSL.

Disordered stretches follow at residues 1–30 and 43–73; these read MEMGSNSGPGHGPGQAESGGSSTESSSFSG and GGGGSGSSSSGGRSNRRVRGGGSGQSGQIPR. Low complexity predominate over residues 18-30; that stretch reads SGGSSTESSSFSG. The SBP-type zinc finger occupies 71-148; the sequence is IPRCQVEGCG…AGHNERRRKP (78 aa). The Zn(2+) site is built by cysteine 74, cysteine 79, cysteine 96, histidine 99, cysteine 115, cysteine 118, histidine 122, and cysteine 134. The Bipartite nuclear localization signal motif lies at 131–147; it reads KRSCRRRLAGHNERRRK. 2 disordered regions span residues 252–278 and 345–375; these read LLSNPHQPHDNNNNNNNNNNNNNNTWR and SDHHHQSRRQYMEDENTRAYDSSSHHTNWSL. A compositionally biased stretch (low complexity) spans 262 to 275; it reads NNNNNNNNNNNNNN. The span at 345–362 shows a compositional bias: basic and acidic residues; the sequence is SDHHHQSRRQYMEDENTR. A compositionally biased stretch (polar residues) spans 363-375; that stretch reads AYDSSSHHTNWSL.

Requires Zn(2+) as cofactor.

The protein resides in the nucleus. It localises to the cytoplasm. Its function is as follows. Trans-acting factor that binds specifically to the consensus nucleotide sequence 5'-TNCGTACAA-3'. The chain is Squamosa promoter-binding-like protein 9 (SPL9) from Arabidopsis thaliana (Mouse-ear cress).